A 474-amino-acid polypeptide reads, in one-letter code: Gamma-aminobutyric acid receptor subunit beta-1 (474 aa).

Residues 1 to 25 form the signal peptide; the sequence is MWTVQNRESLGLLSFPVMIAMVCCA. The Extracellular portion of the chain corresponds to 26 to 245; that stretch reads HSANEPSNMS…SFRLKRNIGY (220 aa). N-linked (GlcNAc...) asparagine glycosylation is found at Asn33 and Asn105. Tyr122 contributes to the histamine binding site. Cys161 and Cys175 form a disulfide bridge. The N-linked (GlcNAc...) asparagine glycan is linked to Asn174. Histamine is bound by residues 181–182 and Thr227; that span reads SY. Tyr182 and Thr227 together coordinate 4-aminobutanoate. 3 helical membrane passes run 246 to 267, 271 to 293, and 305 to 327; these read FILQ…SFWI, ASAA…STHL, and AIDI…YAFV. Over 328-451 the chain is Cytoplasmic; it reads NYIFFGKGPQ…DLTDVNSIDK (124 aa). A helical membrane pass occupies residues 452–473; that stretch reads WSRMFFPITFSLFNVVYWLYYV.

This sequence belongs to the ligand-gated ion channel (TC 1.A.9) family. Gamma-aminobutyric acid receptor (TC 1.A.9.5) subfamily. GABRB1 sub-subfamily. In terms of assembly, heteropentamer, formed by a combination of alpha (GABRA1-6), beta (GABRB1-3), gamma (GABRG1-3), delta (GABRD), epsilon (GABRE), rho (GABRR1-3), pi (GABRP) and theta (GABRQ) chains, each subunit exhibiting distinct physiological and pharmacological properties. Binds UBQLN1.

It localises to the postsynaptic cell membrane. Its subcellular location is the cell membrane. The enzyme catalyses chloride(in) = chloride(out). With respect to regulation, potentiated by histamine. Beta subunit of the heteropentameric ligand-gated chloride channel gated by gamma-aminobutyric acid (GABA), a major inhibitory neurotransmitter in the brain. GABA-gated chloride channels, also named GABA(A) receptors (GABAAR), consist of five subunits arranged around a central pore and contain GABA active binding site(s) located at the alpha and beta subunit interface(s). When activated by GABA, GABAARs selectively allow the flow of chloride anions across the cell membrane down their electrochemical gradient. Chloride influx into the postsynaptic neuron following GABAAR opening decreases the neuron ability to generate a new action potential, thereby reducing nerve transmission. Beta-containing GABAARs can simultaneously bind GABA and histamine where histamine binds at the interface of two neighboring beta subunits, which may be involved in the regulation of sleep and wakefulness. The polypeptide is Gamma-aminobutyric acid receptor subunit beta-1 (GABRB1) (Bos taurus (Bovine)).